The sequence spans 366 residues: Anhydro-N-acetylmuramic acid kinase (366 aa).

12–19 (GTSMDGAD) lines the ATP pocket.

It belongs to the anhydro-N-acetylmuramic acid kinase family.

It carries out the reaction 1,6-anhydro-N-acetyl-beta-muramate + ATP + H2O = N-acetyl-D-muramate 6-phosphate + ADP + H(+). It functions in the pathway amino-sugar metabolism; 1,6-anhydro-N-acetylmuramate degradation. It participates in cell wall biogenesis; peptidoglycan recycling. Functionally, catalyzes the specific phosphorylation of 1,6-anhydro-N-acetylmuramic acid (anhMurNAc) with the simultaneous cleavage of the 1,6-anhydro ring, generating MurNAc-6-P. Is required for the utilization of anhMurNAc either imported from the medium or derived from its own cell wall murein, and thus plays a role in cell wall recycling. The protein is Anhydro-N-acetylmuramic acid kinase of Neisseria meningitidis serogroup C (strain 053442).